A 384-amino-acid polypeptide reads, in one-letter code: Outer membrane protein assembly factor BamC (384 aa).

An N-terminal signal peptide occupies residues Met1–Gly23. Cys24 carries the N-palmitoyl cysteine lipid modification. Cys24 is lipidated: S-diacylglycerol cysteine. Disordered regions lie at residues Leu47–Lys70 and Gln251–Leu273.

It belongs to the BamC family. As to quaternary structure, part of the Bam complex.

It is found in the cell outer membrane. In terms of biological role, part of the outer membrane protein assembly complex, which is involved in assembly and insertion of beta-barrel proteins into the outer membrane. In Accumulibacter regalis, this protein is Outer membrane protein assembly factor BamC.